The primary structure comprises 735 residues: MEIGTEISRKIRSAIKGKLQELGAYVDEELPDYIMVMVANKKSQDQMTEDLSLFLGNNTIRFTVWLHGVLDKLRSVTTEPSSLKSPDASIFDSHVPSNKSSFSRGDERRHEAAVPPLAVSSSRPEKRDSRVSTSSQEQKSTNVRHSYDDGASTRLMSTVKPLREPAPSEDVIDIKPEPDDLIDEDLNFVQENPLSQKKPTVTLTYGSSRPSIEIYRPPASRNADTGTHLNRLQLHPQQSSAHAAKQLDVQSSQVSEAGRLCEPPVLSSVEDTYSPFFRNNLDKMSIEDENFRKRKLPVVSSVVKVKRFSHDGEEEEEDEDYGTRIGSLSSSVSVPAKPERRPSLPPSKQANKNLILKAISEAQESVTKTTNYSAVPQKQTLPVAPRTRTSQEELLAEMVQGQNRAPRISPPVKEEEAKGDNTGKSQGTQQRQLLSRLQIDPVMVETMEMSQDYYDMESMVHADTRSFILKKPKLSEEIVVTPNQDSGMKTADALRVLSGHLMQTRDLVQPDKPASPKFIVTLDGVPSPPGYMSDQEEEMCFEGMKPVNQTSASNKGLRGLLHPQQLHLLSRQLEDPDGSFSNAEMTDLSVAQKPEKLLERCKYWPACKNGDECVYHHPISPCKAFPNCKFAEKCLFVHPNCKYDTKCTKADCPFTHMSRRASILTPKPVSSPAPSSNGQLCRYFPACKKMECPFYHPKHCRFNTQCTRPDCTFYHPTITVPPRHALKWIRPQSSE.

Met1 carries the post-translational modification N-acetylmethionine. The interval 78 to 153 (TEPSSLKSPD…RHSYDDGAST (76 aa)) is disordered. A Phosphoserine modification is found at Ser85. Residues Lys99, Lys139, Lys175, and Lys198 each participate in a glycyl lysine isopeptide (Lys-Gly) (interchain with G-Cter in SUMO2) cross-link. Residues 131–144 (VSTSSQEQKSTNVR) show a composition bias toward polar residues. Ser240 bears the Phosphoserine mark. Residues Lys245, Lys283, and Lys295 each participate in a glycyl lysine isopeptide (Lys-Gly) (interchain with G-Cter in SUMO2) cross-link. A disordered region spans residues 308–351 (FSHDGEEEEEDEDYGTRIGSLSSSVSVPAKPERRPSLPPSKQAN). Phosphoserine is present on residues Ser309, Ser327, and Ser343. Lys357 bears the N6-acetyllysine; alternate mark. Residue Lys357 forms a Glycyl lysine isopeptide (Lys-Gly) (interchain with G-Cter in SUMO2); alternate linkage. Residue Lys378 forms a Glycyl lysine isopeptide (Lys-Gly) (interchain with G-Cter in SUMO2) linkage. Ser390 and Ser409 each carry phosphoserine. A disordered region spans residues 399 to 431 (VQGQNRAPRISPPVKEEEAKGDNTGKSQGTQQR). Residues 412-421 (VKEEEAKGDN) show a composition bias toward basic and acidic residues. Lys413 is covalently cross-linked (Glycyl lysine isopeptide (Lys-Gly) (interchain with G-Cter in SUMO2)). The span at 422–431 (TGKSQGTQQR) shows a compositional bias: polar residues. A Glycyl lysine isopeptide (Lys-Gly) (interchain with G-Cter in SUMO2) cross-link involves residue Lys489. Phosphoserine occurs at positions 498, 515, 527, and 620. 5 C3H1-type zinc fingers span residues 595 to 620 (EKLLERCKYWPACKNGDECVYHHPIS), 621 to 640 (PCKAFPNCKFAEKCLFVHPN), 641 to 656 (CKYDTKCTKADCPFTH), 681 to 698 (CRYFPACKKMECPFYHPK), and 700 to 718 (CRFNTQCTRPDCTFYHPTI).

The protein belongs to the ZC3H14 family. In terms of assembly, homodimer; facilitating circular RNAs (circRNAs) formation. Associates with the spliceosome. Interacts with HOOK2. Interacts with ZFC3H1 in a RNase-sensitive manner. Expressed in hippocampal pyramidal neurons (at protein level). Expressed in kidney, liver, muscle, heart brain and testes. Expressed in hippocampal pyramidal neurons.

The protein resides in the nucleus speckle. Its function is as follows. RNA-binding protein involved in the biogenesis of circular RNAs (circRNAs), which are produced by back-splicing circularization of pre-mRNAs. Acts by binding to both exon-intron boundary and 3'-UTR of pre-mRNAs to promote circRNA biogenesis through dimerization and the association with the spliceosome. Required for spermatogenesis via involvement in circRNA biogenesis. Regulates the pre-mRNA processing of ATP5MC1; preventing its degradation. Also binds the poly(A) tail of mRNAs; controlling poly(A) length in neuronal cells. This Mus musculus (Mouse) protein is Zinc finger CCCH domain-containing protein 14.